The following is a 223-amino-acid chain: Small ribosomal subunit protein uS3 (223 aa).

In terms of domain architecture, KH type-2 spans 38–106; it reads LKRELKEKLK…EVFIDILEVN (69 aa).

This sequence belongs to the universal ribosomal protein uS3 family. In terms of assembly, part of the 30S ribosomal subunit. Forms a tight complex with proteins S10 and S14.

Binds the lower part of the 30S subunit head. Binds mRNA in the 70S ribosome, positioning it for translation. This chain is Small ribosomal subunit protein uS3, found in Acidobacterium capsulatum (strain ATCC 51196 / DSM 11244 / BCRC 80197 / JCM 7670 / NBRC 15755 / NCIMB 13165 / 161).